A 390-amino-acid chain; its full sequence is Multidrug resistance protein MdtL (390 aa).

12 consecutive transmembrane segments (helical) span residues phenylalanine 4–valine 24, isoleucine 42–alanine 62, proline 69–threonine 89, leucine 93–phenylalanine 113, leucine 131–methionine 151, serine 158–leucine 178, leucine 199–phenylalanine 221, alanine 245–phenylalanine 265, threonine 269–serine 289, valine 293–methionine 313, alanine 316–valine 336, and alanine 353–isoleucine 375.

It belongs to the major facilitator superfamily. DHA1 family. MdtL (TC 2.A.1.2.22) subfamily.

It is found in the cell inner membrane. The sequence is that of Multidrug resistance protein MdtL from Citrobacter koseri (strain ATCC BAA-895 / CDC 4225-83 / SGSC4696).